A 270-amino-acid chain; its full sequence is Malonyl-[acyl-carrier protein] O-methyltransferase (270 aa).

Belongs to the methyltransferase superfamily.

The enzyme catalyses malonyl-[ACP] + S-adenosyl-L-methionine = malonyl-[ACP] methyl ester + S-adenosyl-L-homocysteine. The protein operates within cofactor biosynthesis; biotin biosynthesis. In terms of biological role, converts the free carboxyl group of a malonyl-thioester to its methyl ester by transfer of a methyl group from S-adenosyl-L-methionine (SAM). It allows to synthesize pimeloyl-ACP via the fatty acid synthetic pathway. This Magnetococcus marinus (strain ATCC BAA-1437 / JCM 17883 / MC-1) protein is Malonyl-[acyl-carrier protein] O-methyltransferase.